We begin with the raw amino-acid sequence, 334 residues long: Acryloyl-coenzyme A reductase (334 aa).

Cys38 lines the Zn(2+) pocket. Tyr39 is a binding site for NADP(+). Residues His60, Asp90, Cys93, Cys96, Cys104, and Cys146 each contribute to the Zn(2+) site. NADP(+) contacts are provided by residues 173–176 (SGGV) and 195–197 (TTS).

This sequence belongs to the zinc-containing alcohol dehydrogenase family. In terms of assembly, monomer. Zn(2+) serves as cofactor.

It catalyses the reaction propanoyl-CoA + NADP(+) = acryloyl-CoA + NADPH + H(+). Its function is as follows. Plays a role in autotrophic carbon fixation via the 3-hydroxypropionate/4-hydroxybutyrate cycle. Catalyzes the acryloyl-CoA dependent NADPH oxidation and formation of propionyl-CoA. Inactive towards 3-hydroxypropionyl-CoA, NADH and crotonyl-CoA. The polypeptide is Acryloyl-coenzyme A reductase (Sulfurisphaera tokodaii (strain DSM 16993 / JCM 10545 / NBRC 100140 / 7) (Sulfolobus tokodaii)).